We begin with the raw amino-acid sequence, 903 residues long: MLGFLKNFLDDNAREVKKLQRVVTAVNELEPRIEKLTDAELQAKTPALRERLEAGAPLDDLLPEAFAVVREVSRRVLDMRHFDVQIMGGVVLHQGKIAEMKTGEGKTLVATLPAYLNALTGRGVHIVTVNDYLAKRDSEWMGHIYRFLGLSTGLIVHGLDARQRQASYAADVIYGTNNEFGFDYLRDNMAMYPRDLVQRDLYYAIVDEVDSILIDEARTPLIISGQSGKPTDTYYTMARLVPKLKAETHFAVDEKARTVSLTEEGFARCEELLNIDNLSDPEHEEVLHHLNQALKAHALMKRDRDYVVKDGQVIIVDEFTGRLMFGRRYSDGLHQAIEAKEGVKIERESQTLATITFQNYFRMYEKLAGMTGTADTEAEEFKKIYGLDVVVVPTHKPMIREDLPDAVFKTEEGKFRAVVEEIAARHATGQPVLVGTISIEKSEVLSRMLTRRGIPHQVLNAKYHEKEAEIVAQAGRIGAVTIATNMAGRGTDIMLGGNPSFLALQEMRRRDYPPEVIAEAAEYGPCTEEVAEARRVYRELYAEFKKETDAEHDRVVALGGLFIIGTERHEARRIDNQLRGRCGRQGDPGATQFFVALNDDLLRLFGGDNIAGLMDRLKMDEDAPLEHPLISKSLETAQRRVENRNFSIRKHVLNYDDVINQQRELIYRQRRQVLCGEDLRPVVRQMMEEVAGQAVTAFAPEGVYPEEWNYEGLSEYMTQILPGEKWTVEDLEERLGKKRDDFRREDLRRLFLNEMEQAYAAREAELGAETMREIERVLMLRIVDEKWMDHLDAMDQLREGVGLRAYGQKDPLVEYKFESFDMFQNMIASIQEETVKKLFRVRVVPPQQAERRQVKENLYAAGGDGVKQPVRRDKKVGRNSPCPCGSGKKYKKCCAAKDEQAAG.

Residues Gln-85, 103–107, and Asp-492 contribute to the ATP site; that span reads GEGKT. The interval 863–890 is disordered; sequence GDGVKQPVRRDKKVGRNSPCPCGSGKKY. Zn(2+)-binding residues include Cys-882, Cys-884, Cys-893, and Cys-894.

It belongs to the SecA family. Monomer and homodimer. Part of the essential Sec protein translocation apparatus which comprises SecA, SecYEG and auxiliary proteins SecDF. Other proteins may also be involved. Requires Zn(2+) as cofactor.

It localises to the cell membrane. The protein resides in the cytoplasm. It catalyses the reaction ATP + H2O + cellular proteinSide 1 = ADP + phosphate + cellular proteinSide 2.. Part of the Sec protein translocase complex. Interacts with the SecYEG preprotein conducting channel. Has a central role in coupling the hydrolysis of ATP to the transfer of proteins into and across the cell membrane, serving as an ATP-driven molecular motor driving the stepwise translocation of polypeptide chains across the membrane. This chain is Protein translocase subunit SecA, found in Desulforudis audaxviator (strain MP104C).